The following is a 346-amino-acid chain: Phosphoribosylformylglycinamidine cyclo-ligase (346 aa).

The protein belongs to the AIR synthase family.

Its subcellular location is the cytoplasm. The enzyme catalyses 2-formamido-N(1)-(5-O-phospho-beta-D-ribosyl)acetamidine + ATP = 5-amino-1-(5-phospho-beta-D-ribosyl)imidazole + ADP + phosphate + H(+). It functions in the pathway purine metabolism; IMP biosynthesis via de novo pathway; 5-amino-1-(5-phospho-D-ribosyl)imidazole from N(2)-formyl-N(1)-(5-phospho-D-ribosyl)glycinamide: step 2/2. This chain is Phosphoribosylformylglycinamidine cyclo-ligase, found in Shewanella halifaxensis (strain HAW-EB4).